Here is a 288-residue protein sequence, read N- to C-terminus: Octanoyl-[GcvH]:protein N-octanoyltransferase (288 aa).

The 210-residue stretch at 44–253 folds into the BPL/LPL catalytic domain; that stretch reads AGGPPTFRLW…VLESAMGPQV (210 aa). C148 (acyl-thioester intermediate) is an active-site residue. Positions 269–288 are disordered; sequence GREGASETDPRRVAYGVDRP. Positions 272–288 are enriched in basic and acidic residues; the sequence is GASETDPRRVAYGVDRP.

Belongs to the octanoyltransferase LipL family.

It catalyses the reaction N(6)-octanoyl-L-lysyl-[glycine-cleavage complex H protein] + L-lysyl-[lipoyl-carrier protein] = N(6)-octanoyl-L-lysyl-[lipoyl-carrier protein] + L-lysyl-[glycine-cleavage complex H protein]. It participates in protein modification; protein lipoylation via endogenous pathway; protein N(6)-(lipoyl)lysine from octanoyl-[acyl-carrier-protein]. Catalyzes the amidotransfer (transamidation) of the octanoyl moiety from octanoyl-GcvH to the lipoyl domain of the E2 subunit of lipoate-dependent enzymes. This Kyrpidia tusciae (strain DSM 2912 / NBRC 15312 / T2) (Bacillus tusciae) protein is Octanoyl-[GcvH]:protein N-octanoyltransferase.